A 560-amino-acid polypeptide reads, in one-letter code: DNA ligase B (560 aa).

The active-site N6-AMP-lysine intermediate is the Lys-124.

The protein belongs to the NAD-dependent DNA ligase family. LigB subfamily.

The catalysed reaction is NAD(+) + (deoxyribonucleotide)n-3'-hydroxyl + 5'-phospho-(deoxyribonucleotide)m = (deoxyribonucleotide)n+m + AMP + beta-nicotinamide D-nucleotide.. Its function is as follows. Catalyzes the formation of phosphodiester linkages between 5'-phosphoryl and 3'-hydroxyl groups in double-stranded DNA using NAD as a coenzyme and as the energy source for the reaction. This is DNA ligase B from Escherichia coli O157:H7.